The primary structure comprises 665 residues: Pentatricopeptide repeat-containing protein At3g02490, mitochondrial (665 aa).

The N-terminal 37 residues, 1 to 37 (MRYQWRSLLFRSYRSSPRPFLSHHSRFQVISNSTRSF), are a transit peptide targeting the mitochondrion. 8 PPR repeats span residues 280 to 314 (DEKTYNAMARVLGKEKFLDRFQHMIEEIRSAGYEM), 315 to 349 (EMETYVRVSARFCQTKMIKEAVELFEFAMAGSISN), 352 to 388 (TPHCCSLLLKKIVTAKKLDMDLFTRTLKAYTGNGNVV), 389 to 423 (PDVMLQHVLKSLRSVDRFGQSNEVLKAMNEGGYVP), 424 to 458 (SGDLQSVIASGLSRKGKKDEANELVNFMEASGNHL), 459 to 493 (DDKAMASLVEGHCDAKDLEEASECFKKMIGKEGVS), 495 to 530 (AGYAFEKLVLAYCNSFQARDVYKLFSELVKQNQLKP), and 536 to 570 (KIMVRNLLMKKVARDGGFEEALSLLPMMRNHGFPP).

Belongs to the PPR family. P subfamily.

Its subcellular location is the mitochondrion. The polypeptide is Pentatricopeptide repeat-containing protein At3g02490, mitochondrial (Arabidopsis thaliana (Mouse-ear cress)).